Here is a 129-residue protein sequence, read N- to C-terminus: Small ribosomal subunit protein uS12 (129 aa).

3-methylthioaspartic acid is present on Asp89. Residues 101 to 129 (TLDTSGVSDRKQSRSKYGAKQPKAVAAKK) form a disordered region.

Belongs to the universal ribosomal protein uS12 family. In terms of assembly, part of the 30S ribosomal subunit. Contacts proteins S8 and S17. May interact with IF1 in the 30S initiation complex.

Functionally, with S4 and S5 plays an important role in translational accuracy. Interacts with and stabilizes bases of the 16S rRNA that are involved in tRNA selection in the A site and with the mRNA backbone. Located at the interface of the 30S and 50S subunits, it traverses the body of the 30S subunit contacting proteins on the other side and probably holding the rRNA structure together. The combined cluster of proteins S8, S12 and S17 appears to hold together the shoulder and platform of the 30S subunit. The chain is Small ribosomal subunit protein uS12 from Chlorobium luteolum (strain DSM 273 / BCRC 81028 / 2530) (Pelodictyon luteolum).